Here is a 60-residue protein sequence, read N- to C-terminus: uncharacterized protein (60 aa).

It is found in the host cytoplasm. This is an uncharacterized protein from Escherichia phage Mu (Bacteriophage Mu).